A 124-amino-acid polypeptide reads, in one-letter code: Small ribosomal subunit protein bS16 (124 aa).

Residues valine 88 to glycine 124 are disordered. Residues lysine 100 to alanine 114 show a composition bias toward basic and acidic residues. Residues alanine 115–glycine 124 show a composition bias toward low complexity.

Belongs to the bacterial ribosomal protein bS16 family.

The protein is Small ribosomal subunit protein bS16 of Rhodospirillum rubrum (strain ATCC 11170 / ATH 1.1.1 / DSM 467 / LMG 4362 / NCIMB 8255 / S1).